A 468-amino-acid chain; its full sequence is Ubiquitin carboxyl-terminal hydrolase MINDY-1 (468 aa).

Polar residues predominate over residues 1–19; it reads MEQPQTENPAPSKATSAET. A disordered region spans residues 1–105; the sequence is MEQPQTENPA…RPQELPQSPR (105 aa). A compositionally biased stretch (basic and acidic residues) spans 22–41; sequence SENHEALSGPEKHPQDKDGA. Residues 43 to 54 show a composition bias toward low complexity; it reads ADGAAGEQEPGD. Positions 68 to 80 are enriched in pro residues; it reads CPPPEASSSPPGP. Ser103 bears the Phosphoserine mark. The Nucleophile role is filled by Cys137. His319 (proton acceptor) is an active-site residue. The tract at residues 388 to 427 is ubiquitin-binding domain (UBD); that stretch reads QVDQDYLIALSLQQQQQPQGTLGLSDLELAQQLQQEEYQQ. Low complexity predominate over residues 423 to 432; sequence EEYQQQQAVQ. The disordered stretch occupies residues 423–468; the sequence is EEYQQQQAVQPVRTRAPSPQGRGATSGRPAGERRQRSKTESDCVLL. A Phosphoserine modification is found at Ser440. Residues 452 to 468 show a composition bias toward basic and acidic residues; sequence AGERRQRSKTESDCVLL.

This sequence belongs to the MINDY deubiquitinase family. FAM63 subfamily.

The enzyme catalyses Thiol-dependent hydrolysis of ester, thioester, amide, peptide and isopeptide bonds formed by the C-terminal Gly of ubiquitin (a 76-residue protein attached to proteins as an intracellular targeting signal).. In terms of biological role, hydrolase that can specifically remove 'Lys-48'-linked conjugated ubiquitin from proteins. Has exodeubiquitinase activity and has a preference for long polyubiquitin chains. May play a regulatory role at the level of protein turnover. The protein is Ubiquitin carboxyl-terminal hydrolase MINDY-1 (Mindy1) of Mus musculus (Mouse).